We begin with the raw amino-acid sequence, 247 residues long: MAGHSKWANIQHRKGRQDAKRGKLFTKAAKEIIIAAKGGGDPASNARLRAAIAAAKAVNLPKDKIDNAIKKGTGELAGGDILEISYEGYGPGGVALIVEAATDNRNRTVAEVRHILSKHGGSMGEAGCVGWMFERKGVITLDGGKYTEDQVMEAALEAGADDVRDEGGTWEIHTAVSDFAAVRDALEAAGMEMDSAELSMIPQNTVEVDAETGRKLMRLVDALEDNDDVQNVHANFDLPDEVLAELE.

Residues 1–21 form a disordered region; that stretch reads MAGHSKWANIQHRKGRQDAKR.

This sequence belongs to the TACO1 family.

It localises to the cytoplasm. This chain is Probable transcriptional regulatory protein DvMF_3201, found in Nitratidesulfovibrio vulgaris (strain DSM 19637 / Miyazaki F) (Desulfovibrio vulgaris).